A 327-amino-acid chain; its full sequence is Immunodominant envelope protein p35 (327 aa).

The interval 41–69 (KNGYDDYRDPPSPKPLPKSKQEPNADDKV) is disordered. Over residues 59-69 (SKQEPNADDKV) the composition is skewed to basic and acidic residues. Residues 291 to 311 (ITMMFLIAIVIIIGLAIFDIN) traverse the membrane as a helical segment.

It belongs to the poxviruses protein p35 family.

Its subcellular location is the virion membrane. Envelope protein that binds to the cell surface to provide virion attachment to target cell. In Fowlpox virus (strain NVSL) (FPV), this protein is Immunodominant envelope protein p35.